The following is a 538-amino-acid chain: Probable bifunctional riboflavin biosynthesis protein RIBA 1, chloroplastic (538 aa).

The segment covering 1-16 has biased composition (polar residues); that stretch reads MSRLSSIYSQHRTSGL. The segment at 1–29 is disordered; sequence MSRLSSIYSQHRTSGLRSDRSIMPNSTSN. The N-terminal 73 residues, 1 to 73, are a transit peptide targeting the chloroplast; that stretch reads MSRLSSIYSQ…NGQASPSKVV (73 aa). Residues 46–311 are DHBP synthase; that stretch reads RNFHISHAVG…IADLIRYRRK (266 aa). Residues 134–135, D139, 249–253, and E273 each bind D-ribulose 5-phosphate; these read RE and RAGHT. E135 is a binding site for Mg(2+). H252 is a binding site for Mg(2+). The interval 312–530 is GTP cyclohydrolase II; it reads RDRLVERVCV…DGGIKKEQDQ (219 aa). A GTP-binding site is contributed by 362-366; that stretch reads RVHSE. 3 residues coordinate Zn(2+): C367, C378, and C380. Residues Q383, 406–408, and T428 each bind GTP; that span reads EGR. D440 acts as the Proton acceptor; for GTP cyclohydrolase activity in catalysis. The Nucleophile; for GTP cyclohydrolase activity role is filled by R442. GTP is bound by residues T463 and K468. The tract at residues 506 to 538 is disordered; the sequence is HVYGTRPSGNTSTLADGGIKKEQDQIDSASEQE.

In the N-terminal section; belongs to the DHBP synthase family. This sequence in the C-terminal section; belongs to the GTP cyclohydrolase II family. Requires Mg(2+) as cofactor. Mn(2+) serves as cofactor. The cofactor is Zn(2+).

It is found in the plastid. It localises to the chloroplast. The catalysed reaction is D-ribulose 5-phosphate = (2S)-2-hydroxy-3-oxobutyl phosphate + formate + H(+). It catalyses the reaction GTP + 4 H2O = 2,5-diamino-6-hydroxy-4-(5-phosphoribosylamino)-pyrimidine + formate + 2 phosphate + 3 H(+). Its pathway is cofactor biosynthesis; riboflavin biosynthesis; 2-hydroxy-3-oxobutyl phosphate from D-ribulose 5-phosphate: step 1/1. The protein operates within cofactor biosynthesis; riboflavin biosynthesis; 5-amino-6-(D-ribitylamino)uracil from GTP: step 1/4. Its function is as follows. Involved in riboflavin biosynthesis. Catalyzes both the conversion of D-ribulose 5-phosphate to formate and 3,4-dihydroxy-2-butanone 4-phosphate and the conversion of GTP to 2,5-diamino-6-ribosylamino-4(3H)-pyrimidinone 5'-phosphate (DARP), formate and pyrophosphate. This is Probable bifunctional riboflavin biosynthesis protein RIBA 1, chloroplastic (RIBA1) from Oryza sativa subsp. japonica (Rice).